The sequence spans 77 residues: Conotoxin Ar5.1 a (77 aa).

The first 19 residues, 1-19 (MLCLPVFIILLLLASPAAS), serve as a signal peptide directing secretion. Positions 20-44 (NPLETRIQSDLIRAALEDADMKNEK) are excised as a propeptide.

Belongs to the conotoxin T superfamily. Contains 2 disulfide bonds that can be either 'C1-C3, C2-C4' or 'C1-C4, C2-C3', since these disulfide connectivities have been observed for conotoxins with cysteine framework V (for examples, see AC P0DQQ7 and AC P81755). As to expression, expressed by the venom duct.

The protein localises to the secreted. The sequence is that of Conotoxin Ar5.1 a from Conus arenatus (Sand-dusted cone).